The chain runs to 469 residues: Adenosylhomocysteinase (469 aa).

3 residues coordinate substrate: Thr-63, Asp-139, and Glu-164. 165 to 167 provides a ligand contact to NAD(+); the sequence is TTT. Substrate is bound by residues Lys-194 and Asp-198. Residues Asn-199, 228–233, Glu-251, Asn-300, 321–323, and Asn-375 each bind NAD(+); these read GYGDVG and IGH.

Belongs to the adenosylhomocysteinase family. It depends on NAD(+) as a cofactor.

The protein resides in the cytoplasm. The enzyme catalyses S-adenosyl-L-homocysteine + H2O = L-homocysteine + adenosine. It functions in the pathway amino-acid biosynthesis; L-homocysteine biosynthesis; L-homocysteine from S-adenosyl-L-homocysteine: step 1/1. Functionally, may play a key role in the regulation of the intracellular concentration of adenosylhomocysteine. In Pseudomonas aeruginosa (strain LESB58), this protein is Adenosylhomocysteinase.